The sequence spans 85 residues: Ice-structuring protein 4 (85 aa).

Positions 1–21 (MRITEANPDPDAKAVPAAAAP) are cleaved as a signal peptide.

The protein belongs to the type-I AFP family.

Its subcellular location is the secreted. Its function is as follows. Contributes to protect fish blood from freezing at subzero sea water temperatures. Lowers the blood freezing point. Binds to nascent ice crystals and prevents further growth. The chain is Ice-structuring protein 4 from Pseudopleuronectes americanus (Winter flounder).